A 245-amino-acid polypeptide reads, in one-letter code: MILFPAIDLKNGQCVRLEQGDMARATVFNLDPAAQAQSFAAQGFQYLHVVDLDGAFAGKPMNAQAVEAMLKVVSMPVQLGGGIRDLKTIEAWLSKGIARVIIGTAAVRDPALVKEAAKAFPGRVAVGLDARDGNVAVEGWAESSQVTALDIAQRFEDAGVAAIIFTDIARDGLLKGINWDATIALAEAISIPVIASGGLASIEDVRTLLSPRAKKLEGAIAGRALYDGRLDPTEALALIGAAKAA.

The active-site Proton acceptor is the Asp8. Asp129 serves as the catalytic Proton donor.

It belongs to the HisA/HisF family.

It localises to the cytoplasm. It carries out the reaction 1-(5-phospho-beta-D-ribosyl)-5-[(5-phospho-beta-D-ribosylamino)methylideneamino]imidazole-4-carboxamide = 5-[(5-phospho-1-deoxy-D-ribulos-1-ylimino)methylamino]-1-(5-phospho-beta-D-ribosyl)imidazole-4-carboxamide. Its pathway is amino-acid biosynthesis; L-histidine biosynthesis; L-histidine from 5-phospho-alpha-D-ribose 1-diphosphate: step 4/9. The protein is 1-(5-phosphoribosyl)-5-[(5-phosphoribosylamino)methylideneamino] imidazole-4-carboxamide isomerase of Rhodopseudomonas palustris (strain ATCC BAA-98 / CGA009).